We begin with the raw amino-acid sequence, 339 residues long: D-erythrose-4-phosphate dehydrogenase (339 aa).

11–12 (RI) is an NAD(+) binding site. Substrate is bound by residues 153–155 (SCT), arginine 199, 212–213 (TK), and arginine 235. Cysteine 154 (nucleophile) is an active-site residue. Residue asparagine 317 coordinates NAD(+).

It belongs to the glyceraldehyde-3-phosphate dehydrogenase family. Epd subfamily. In terms of assembly, homotetramer.

It localises to the cytoplasm. The enzyme catalyses D-erythrose 4-phosphate + NAD(+) + H2O = 4-phospho-D-erythronate + NADH + 2 H(+). It participates in cofactor biosynthesis; pyridoxine 5'-phosphate biosynthesis; pyridoxine 5'-phosphate from D-erythrose 4-phosphate: step 1/5. In terms of biological role, catalyzes the NAD-dependent conversion of D-erythrose 4-phosphate to 4-phosphoerythronate. This Shewanella pealeana (strain ATCC 700345 / ANG-SQ1) protein is D-erythrose-4-phosphate dehydrogenase.